Here is a 242-residue protein sequence, read N- to C-terminus: Probable 2-phosphosulfolactate phosphatase (242 aa).

This sequence belongs to the ComB family. The cofactor is Mg(2+).

It carries out the reaction (2R)-O-phospho-3-sulfolactate + H2O = (2R)-3-sulfolactate + phosphate. The sequence is that of Probable 2-phosphosulfolactate phosphatase from Prochlorococcus marinus (strain NATL1A).